The sequence spans 154 residues: Myoglobin (154 aa).

Residues Gly2 to Lys148 form the Globin domain. A Phosphoserine modification is found at Ser4. Residue His65 participates in nitrite binding. His65 provides a ligand contact to O2. At Thr68 the chain carries Phosphothreonine. Heme b is bound at residue His94.

It belongs to the globin family. As to quaternary structure, monomeric.

It is found in the cytoplasm. It localises to the sarcoplasm. The enzyme catalyses Fe(III)-heme b-[protein] + nitric oxide + H2O = Fe(II)-heme b-[protein] + nitrite + 2 H(+). It carries out the reaction H2O2 + AH2 = A + 2 H2O. Its function is as follows. Monomeric heme protein which primary function is to store oxygen and facilitate its diffusion within muscle tissues. Reversibly binds oxygen through a pentacoordinated heme iron and enables its timely and efficient release as needed during periods of heightened demand. Depending on the oxidative conditions of tissues and cells, and in addition to its ability to bind oxygen, it also has a nitrite reductase activity whereby it regulates the production of bioactive nitric oxide. Under stress conditions, like hypoxia and anoxia, it also protects cells against reactive oxygen species thanks to its pseudoperoxidase activity. The chain is Myoglobin (MB) from Lycaon pictus (African wild dog).